The sequence spans 199 residues: Golgi to ER traffic protein 1 (199 aa).

Residues 1 to 11 (MLLPDLHPYTI) lie on the Lumenal side of the membrane. A helical membrane pass occupies residues 12-31 (LLSIFLVLVAKQLVATIGKS). Residues 32-115 (TIQEFVWLVY…SIDKASNALI (84 aa)) are Cytoplasmic-facing. A coiled-coil region spans residues 76-116 (YAKWTKLNRQADKLSAELQKLNQEIQQQKSSIDKASNALIL). The chain crosses the membrane as a helical span at residues 116–136 (LVLTTLPIWIARVFYRKTHLF). Topologically, residues 137 to 160 (YIRQGIFPKYVEWVLALPFLPNGA) are lumenal. A helical membrane pass occupies residues 161-177 (VGLTIWMFAVNSVVSNF). Residues 178 to 199 (SFLVSFPFAKRVSKPVRDTKVE) lie on the Cytoplasmic side of the membrane.

It belongs to the WRB/GET1 family. As to quaternary structure, component of the Golgi to ER traffic (GET) complex, which is composed of GET1, GET2 and GET3. Within the complex, GET1 and GET2 form a heterotetramer which is stabilized by phosphatidylinositol binding and which binds to the GET3 homodimer.

The protein resides in the endoplasmic reticulum membrane. It localises to the golgi apparatus membrane. Required for the post-translational delivery of tail-anchored (TA) proteins to the endoplasmic reticulum. Together with GET2, acts as a membrane receptor for soluble GET3, which recognizes and selectively binds the transmembrane domain of TA proteins in the cytosol. The GET complex cooperates with the HDEL receptor ERD2 to mediate the ATP-dependent retrieval of resident ER proteins that contain a C-terminal H-D-E-L retention signal from the Golgi to the ER. This Candida albicans (strain SC5314 / ATCC MYA-2876) (Yeast) protein is Golgi to ER traffic protein 1.